We begin with the raw amino-acid sequence, 160 residues long: SsrA-binding protein (160 aa).

This sequence belongs to the SmpB family.

It localises to the cytoplasm. Its function is as follows. Required for rescue of stalled ribosomes mediated by trans-translation. Binds to transfer-messenger RNA (tmRNA), required for stable association of tmRNA with ribosomes. tmRNA and SmpB together mimic tRNA shape, replacing the anticodon stem-loop with SmpB. tmRNA is encoded by the ssrA gene; the 2 termini fold to resemble tRNA(Ala) and it encodes a 'tag peptide', a short internal open reading frame. During trans-translation Ala-aminoacylated tmRNA acts like a tRNA, entering the A-site of stalled ribosomes, displacing the stalled mRNA. The ribosome then switches to translate the ORF on the tmRNA; the nascent peptide is terminated with the 'tag peptide' encoded by the tmRNA and targeted for degradation. The ribosome is freed to recommence translation, which seems to be the essential function of trans-translation. In Shewanella amazonensis (strain ATCC BAA-1098 / SB2B), this protein is SsrA-binding protein.